The chain runs to 265 residues: Glutamate 5-kinase (265 aa).

K15 lines the ATP pocket. Positions 55, 142, and 158 each coordinate substrate. ATP-binding positions include 178–179 and 220–226; these read SD and TGGMVTK.

Belongs to the glutamate 5-kinase family.

It is found in the cytoplasm. It carries out the reaction L-glutamate + ATP = L-glutamyl 5-phosphate + ADP. It functions in the pathway amino-acid biosynthesis; L-proline biosynthesis; L-glutamate 5-semialdehyde from L-glutamate: step 1/2. Functionally, catalyzes the transfer of a phosphate group to glutamate to form L-glutamate 5-phosphate. The chain is Glutamate 5-kinase from Lactiplantibacillus plantarum (strain ATCC BAA-793 / NCIMB 8826 / WCFS1) (Lactobacillus plantarum).